The following is a 291-amino-acid chain: Undecaprenyl-diphosphatase (291 aa).

The next 8 membrane-spanning stretches (helical) occupy residues 1–21, 48–68, 102–122, 126–146, 162–182, 203–223, 231–251, and 267–287; these read MFII…LTEF, SAFT…AWVF, LHVL…DDFI, LFSV…MIIA, ISYF…WPGF, SDFT…LSLL, IADI…GLIA, and FAIY…GFGI.

Belongs to the UppP family.

It is found in the cell membrane. The enzyme catalyses di-trans,octa-cis-undecaprenyl diphosphate + H2O = di-trans,octa-cis-undecaprenyl phosphate + phosphate + H(+). Functionally, catalyzes the dephosphorylation of undecaprenyl diphosphate (UPP). Confers resistance to bacitracin. The sequence is that of Undecaprenyl-diphosphatase from Staphylococcus aureus (strain MRSA252).